The following is a 105-amino-acid chain: Spermatogenesis-associated protein 8 (105 aa).

In terms of tissue distribution, expressed at high levels in adult testis, at moderate levels in sperm and at low levels in fetal testis. Not detected in other tissues.

The sequence is that of Spermatogenesis-associated protein 8 (SPATA8) from Homo sapiens (Human).